A 207-amino-acid chain; its full sequence is Interleukin-6 (207 aa).

Residues 1-18 form the signal peptide; the sequence is MKFFSIASLGLLLVVATA. Residues 26-47 form a disordered region; sequence REDGENSVTRNKPTRASSGKTR. The span at 31–44 shows a compositional bias: polar residues; it reads NSVTRNKPTRASSG. Cys65 and Cys71 are disulfide-bonded. Ser74 carries the phosphoserine modification. Cysteines 94 and 104 form a disulfide.

The protein belongs to the IL-6 superfamily. As to quaternary structure, component of a hexamer of two molecules each of IL6, IL6R and IL6ST; first binds to IL6R to associate with the signaling subunit IL6ST. Interacts with IL6R (via the N-terminal ectodomain); this interaction may be affected by IL6R-binding with SORL1, hence decreasing IL6 cis signaling. Interacts with SORL1 (via the N-terminal ectodomain); this interaction leads to IL6 internalization and lysosomal degradation. May form a trimeric complex with the soluble SORL1 ectodomain and soluble IL6R receptor; this interaction might stabilize circulating IL6, hence promoting IL6 trans signaling.

It is found in the secreted. Functionally, cytokine with a wide variety of biological functions in immunity, tissue regeneration, and metabolism. Binds to IL6R, then the complex associates to the signaling subunit IL6ST/gp130 to trigger the intracellular IL6-signaling pathway. The interaction with the membrane-bound IL6R and IL6ST stimulates 'classic signaling', whereas the binding of IL6 and soluble IL6R to IL6ST stimulates 'trans-signaling'. Alternatively, 'cluster signaling' occurs when membrane-bound IL6:IL6R complexes on transmitter cells activate IL6ST receptors on neighboring receiver cells. In terms of biological role, IL6 is a potent inducer of the acute phase response. Rapid production of IL6 contributes to host defense during infection and tissue injury, but excessive IL6 synthesis is involved in disease pathology. In the innate immune response, is synthesized by myeloid cells, such as macrophages and dendritic cells, upon recognition of pathogens through toll-like receptors (TLRs) at the site of infection or tissue injury. In the adaptive immune response, is required for the differentiation of B cells into immunoglobulin-secreting cells. Plays a major role in the differentiation of CD4(+) T cell subsets. Essential factor for the development of T follicular helper (Tfh) cells that are required for the induction of germinal-center formation. Required to drive naive CD4(+) T cells to the Th17 lineage. Also required for proliferation of myeloma cells and the survival of plasmablast cells. Acts as an essential factor in bone homeostasis and on vessels directly or indirectly by induction of VEGF, resulting in increased angiogenesis activity and vascular permeability. Induces, through 'trans-signaling' and synergistically with IL1B and TNF, the production of VEGF. Involved in metabolic controls, is discharged into the bloodstream after muscle contraction increasing lipolysis and improving insulin resistance. 'Trans-signaling' in central nervous system also regulates energy and glucose homeostasis. Mediates, through GLP-1, crosstalk between insulin-sensitive tissues, intestinal L cells and pancreatic islets to adapt to changes in insulin demand. Also acts as a myokine. Plays a protective role during liver injury, being required for maintenance of tissue regeneration. Also has a pivotal role in iron metabolism by regulating HAMP/hepcidin expression upon inflammation or bacterial infection. Through activation of IL6ST-YAP-NOTCH pathway, induces inflammation-induced epithelial regeneration. The chain is Interleukin-6 (IL6) from Marmota monax (Woodchuck).